The primary structure comprises 417 residues: MFSFYFNDNKITKLLMVGYGSTGKSVCDFLANFIDITVDISQNDDEFVNYDLGSYDLITVSPGIPLNKSPYRVLTKFKDKIVSDIDIFYQYIKDTKAKTIAVTGSNGKSTVVTMTDFVLKDLGYKSILVGNIGTPALNKIGEKFDYCVVEVSSFQIDLFNCVRFDLGCIINVSPDHLDRYQNFEQYKQSKLNLAKFSNDFFVYDVHNNGIKYAGEYQIIRGAIYRNSTKLLDIAETKLFGEHNLENIIVVLNILDRLGLDINQAIDSIKKFKGLEHRCKIVKKVNGTTYINDSKGTNVGATIAALNSITNSKNIILLLGGVAKGGDFSLMIKSLDKYVKYVYIYGADKEYIESYIKGYCKYQLCNNMKQAFELASQKANSNEIVLLSPACASFDEFSGYAQRGEVFQNLVAQLEQKS.

104–110 (GSNGKST) provides a ligand contact to ATP.

This sequence belongs to the MurCDEF family.

The protein resides in the cytoplasm. It catalyses the reaction UDP-N-acetyl-alpha-D-muramoyl-L-alanine + D-glutamate + ATP = UDP-N-acetyl-alpha-D-muramoyl-L-alanyl-D-glutamate + ADP + phosphate + H(+). Its pathway is cell wall biogenesis; peptidoglycan biosynthesis. Cell wall formation. Catalyzes the addition of glutamate to the nucleotide precursor UDP-N-acetylmuramoyl-L-alanine (UMA). The protein is UDP-N-acetylmuramoylalanine--D-glutamate ligase of Francisella tularensis subsp. novicida (strain U112).